Consider the following 174-residue polypeptide: N5-carboxyaminoimidazole ribonucleotide mutase (174 aa).

Ser15, Asp18, and Arg45 together coordinate substrate.

The protein belongs to the AIR carboxylase family. Class I subfamily.

The catalysed reaction is 5-carboxyamino-1-(5-phospho-D-ribosyl)imidazole + H(+) = 5-amino-1-(5-phospho-D-ribosyl)imidazole-4-carboxylate. Its pathway is purine metabolism; IMP biosynthesis via de novo pathway; 5-amino-1-(5-phospho-D-ribosyl)imidazole-4-carboxylate from 5-amino-1-(5-phospho-D-ribosyl)imidazole (N5-CAIR route): step 2/2. Functionally, catalyzes the conversion of N5-carboxyaminoimidazole ribonucleotide (N5-CAIR) to 4-carboxy-5-aminoimidazole ribonucleotide (CAIR). The chain is N5-carboxyaminoimidazole ribonucleotide mutase from Pyrococcus abyssi (strain GE5 / Orsay).